The primary structure comprises 241 residues: Fatty acid metabolism regulator protein (241 aa).

The region spanning 11 to 79 is the HTH gntR-type domain; sequence QSPAALAEEY…HGKPTKVNNI (69 aa). Residues 39 to 58 constitute a DNA-binding region (H-T-H motif); the sequence is ERDLADKIGVTRTTLREVLQ.

As to quaternary structure, homodimer.

Its subcellular location is the cytoplasm. In terms of biological role, multifunctional regulator of fatty acid metabolism. This is Fatty acid metabolism regulator protein from Haemophilus influenzae (strain 86-028NP).